We begin with the raw amino-acid sequence, 581 residues long: Moesin/ezrin/radixin homolog 1 (581 aa).

The FERM domain occupies 8–298 (MNVRVTTMDA…GNHELYMRRR (291 aa)). The disordered stretch occupies residues 452–519 (QVAKGSRAAA…EERRTLAERN (68 aa)). Over residues 459-469 (AAAALQAATTT) the composition is skewed to low complexity. A compositionally biased stretch (acidic residues) spans 477 to 486 (EEEENEEELI). Over residues 495-519 (FSKDFDTDEHIKDPVEERRTLAERN) the composition is skewed to basic and acidic residues. Threonine 562 carries the phosphothreonine modification.

As to quaternary structure, interacts with cytoskeletal actin.

The protein localises to the cell junction. The protein resides in the adherens junction. It localises to the cell projection. Its subcellular location is the microvillus. It is found in the rhabdomere. The protein localises to the cell membrane. The protein resides in the cytoplasm. It localises to the cytoskeleton. In terms of biological role, involved in connections of major cytoskeletal structures to the plasma membrane. The sequence is that of Moesin/ezrin/radixin homolog 1 from Anopheles gambiae (African malaria mosquito).